The chain runs to 452 residues: COP9 signalosome complex subunit 11 (452 aa).

A PCI domain is found at 205–374 (FYIEDPKTMM…ISYSKRSIVD (170 aa)).

Component of a COP9 signalosome-like (CSN) complex.

The protein localises to the cytoplasm. It is found in the nucleus. Functionally, component of the COP9 signalosome (CSN) complex that acts as an regulator of the ubiquitin (Ubl) conjugation pathway by mediating the deneddylation of the cullin subunit of SCF-type E3 ubiquitin-protein ligase complexes The CSN complex is involved in the regulation of the mating pheromone response. PCI8 may also be involved in transcriptional and translational control. In Candida glabrata (strain ATCC 2001 / BCRC 20586 / JCM 3761 / NBRC 0622 / NRRL Y-65 / CBS 138) (Yeast), this protein is COP9 signalosome complex subunit 11 (PCI8).